A 104-amino-acid chain; its full sequence is L-rhamnose mutarotase (104 aa).

Position 18 (Y18) interacts with substrate. The Proton donor role is filled by H22. Substrate-binding positions include Y41 and 76–77 (WW).

It belongs to the rhamnose mutarotase family. As to quaternary structure, homodimer.

The protein resides in the cytoplasm. It catalyses the reaction alpha-L-rhamnose = beta-L-rhamnose. It participates in carbohydrate metabolism; L-rhamnose metabolism. Involved in the anomeric conversion of L-rhamnose. This chain is L-rhamnose mutarotase, found in Escherichia coli O1:K1 / APEC.